A 258-amino-acid polypeptide reads, in one-letter code: Venom plasminogen activator LV-PA (258 aa).

Residues M1–A18 form the signal peptide. A propeptide spanning residues Q19–L24 is cleaved from the precursor. Positions V25–A249 constitute a Peptidase S1 domain. N44 carries N-linked (GlcNAc...) asparagine glycosylation. C50 and C66 are oxidised to a cystine. Residues H65 and D110 each act as charge relay system in the active site. 3 cysteine pairs are disulfide-bonded: C142/C210, C174/C189, and C200/C225. S204 acts as the Charge relay system in catalysis.

Belongs to the peptidase S1 family. Snake venom subfamily. As to quaternary structure, monomer. In terms of processing, N-glycosylated. PubMed:17034951 shows that it contains approximately 10% carbohydrates, PubMed:10871053 shows that it contains approximately 20% carbohydrates. In terms of tissue distribution, expressed by the venom gland.

The protein resides in the secreted. Inhibited by the serine protease inhibitors NPGB, PMSF, p-aminobenzamidine and aprotinin. Not inhibited by soybean trypsin inhibitor or EDTA. In terms of biological role, snake venom serine protease that activates plasminogen. Weakly hydrolyzes the alpha chain of human fibrinogen without releasing fibrinopeptide A. Does not hydrolyze plasma kallikrein or factor Xa. Does not clot fibrinogen. Does not affect platelet function. Induces hypotensive effects on rats. Shows a preferential cleavage at Lys-|-Xaa over Arg-|-Xaa bonds. The sequence is that of Venom plasminogen activator LV-PA from Lachesis muta muta (Bushmaster).